Here is a 396-residue protein sequence, read N- to C-terminus: Flavohemoprotein (396 aa).

One can recognise a Globin domain in the interval 1-136 (MLDNQTIATV…LADIFINREE (136 aa)). Residue His-85 participates in heme b binding. Catalysis depends on charge relay system residues Tyr-95 and Glu-135. The reductase stretch occupies residues 147-396 (GGWRGLRPFR…YECFGPHKVI (250 aa)). Residues 150–255 (RGLRPFRINR…TAPRGDFFLD (106 aa)) enclose the FAD-binding FR-type domain. FAD-binding positions include Tyr-188 and 204–207 (RQYS). 268–273 (GVGLTP) serves as a coordination point for NADP(+). 389-392 (CFGP) serves as a coordination point for FAD.

This sequence belongs to the globin family. Two-domain flavohemoproteins subfamily. The protein in the C-terminal section; belongs to the flavoprotein pyridine nucleotide cytochrome reductase family. Heme b serves as cofactor. Requires FAD as cofactor.

It carries out the reaction 2 nitric oxide + NADPH + 2 O2 = 2 nitrate + NADP(+) + H(+). The catalysed reaction is 2 nitric oxide + NADH + 2 O2 = 2 nitrate + NAD(+) + H(+). In terms of biological role, is involved in NO detoxification in an aerobic process, termed nitric oxide dioxygenase (NOD) reaction that utilizes O(2) and NAD(P)H to convert NO to nitrate, which protects the bacterium from various noxious nitrogen compounds. Therefore, plays a central role in the inducible response to nitrosative stress. The chain is Flavohemoprotein from Photorhabdus laumondii subsp. laumondii (strain DSM 15139 / CIP 105565 / TT01) (Photorhabdus luminescens subsp. laumondii).